A 73-amino-acid chain; its full sequence is Translation initiation factor IF-1 (73 aa).

The S1-like domain maps to 1–73 (MSKKKDVIEM…TRGRITYRYK (73 aa)).

The protein belongs to the IF-1 family. As to quaternary structure, component of the 30S ribosomal translation pre-initiation complex which assembles on the 30S ribosome in the order IF-2 and IF-3, IF-1 and N-formylmethionyl-tRNA(fMet); mRNA recruitment can occur at any time during PIC assembly.

The protein localises to the cytoplasm. Its function is as follows. One of the essential components for the initiation of protein synthesis. Stabilizes the binding of IF-2 and IF-3 on the 30S subunit to which N-formylmethionyl-tRNA(fMet) subsequently binds. Helps modulate mRNA selection, yielding the 30S pre-initiation complex (PIC). Upon addition of the 50S ribosomal subunit IF-1, IF-2 and IF-3 are released leaving the mature 70S translation initiation complex. This Chloroflexus aurantiacus (strain ATCC 29366 / DSM 635 / J-10-fl) protein is Translation initiation factor IF-1.